The chain runs to 129 residues: MSKKKTEELVDALSELTVLEMAELKTLLEDKWGVKAAAPVAVAAPAAGAPAAAVVESTDFQVTLTEAPADKKIGIIKVVREITGLGLKEAKDLVEAAPKELKPTAPKAEAEDIKKKIETAGGKVTLKGL.

The protein belongs to the bacterial ribosomal protein bL12 family. Homodimer. Part of the ribosomal stalk of the 50S ribosomal subunit. Forms a multimeric L10(L12)X complex, where L10 forms an elongated spine to which 2 to 4 L12 dimers bind in a sequential fashion. Binds GTP-bound translation factors.

Functionally, forms part of the ribosomal stalk which helps the ribosome interact with GTP-bound translation factors. Is thus essential for accurate translation. This chain is Large ribosomal subunit protein bL12, found in Protochlamydia amoebophila (strain UWE25).